A 311-amino-acid chain; its full sequence is Ketoisovalerate oxidoreductase subunit VorB (311 aa).

Heterotetramer of one alpha, one beta, one delta and one gamma chain.

The enzyme catalyses 3-methyl-2-oxobutanoate + 2 oxidized [2Fe-2S]-[ferredoxin] + CoA = 2-methylpropanoyl-CoA + 2 reduced [2Fe-2S]-[ferredoxin] + CO2 + H(+). This chain is Ketoisovalerate oxidoreductase subunit VorB (vorB), found in Pyrococcus abyssi (strain GE5 / Orsay).